Consider the following 322-residue polypeptide: MNLYSYSRIIKFPGHNALVLKRLFHRPYQFKSVPDDIKNNLVTECECFVKRLNEKLPDKSQLDISLTLPNKVPEYHKHVLMLSKDPKGWKNWPSKLEMAHEYPHSMVGTLKSSLKDTRDGSGVLVNELALDGYTSSETHLKFLVIPDMKVYEVHRDRVSDFALFLGDGKQDSRKKLSFNDFLKGSDAVGQTAIHSSGSVANSIPNFQSEPFHSDIAMVCGHYLRDARCGELAPLLIAKLNSIKPNLKTGIVSHFGGHKFAGNLIYYQFNGLKIHNDNETGKIDGLWLSKLLPQNLEFVFRHLDKDIILQDFYRGHMSTAAYT.

The protein belongs to the AIM32 family.

This Kluyveromyces lactis (strain ATCC 8585 / CBS 2359 / DSM 70799 / NBRC 1267 / NRRL Y-1140 / WM37) (Yeast) protein is Altered inheritance of mitochondria protein 32 (AIM32).